A 156-amino-acid chain; its full sequence is Small ribosomal subunit protein uS7 (156 aa).

This sequence belongs to the universal ribosomal protein uS7 family. Part of the 30S ribosomal subunit. Contacts proteins S9 and S11.

Its function is as follows. One of the primary rRNA binding proteins, it binds directly to 16S rRNA where it nucleates assembly of the head domain of the 30S subunit. Is located at the subunit interface close to the decoding center, probably blocks exit of the E-site tRNA. The chain is Small ribosomal subunit protein uS7 from Aliivibrio salmonicida (strain LFI1238) (Vibrio salmonicida (strain LFI1238)).